We begin with the raw amino-acid sequence, 257 residues long: Type I iodothyronine deiodinase (257 aa).

Residues 1 to 12 (MGLPGLGLLLKR) lie on the Extracellular side of the membrane. Residues 13–33 (FGVLVRVALKVAVGKVLLTLW) form a helical; Signal-anchor for type III membrane protein membrane-spanning segment. At 34-257 (PSAIRPHLLA…CRSSAQSPRL (224 aa)) the chain is on the cytoplasmic side. Sec126 is a catalytic residue. Residue Sec126 is a non-standard amino acid, selenocysteine.

It belongs to the iodothyronine deiodinase family. In terms of assembly, predominantly monomer. Can form homodimers but homodimerization is not essential for enzyme activity. Liver specific.

The protein localises to the cell membrane. It is found in the endoplasmic reticulum membrane. Its subcellular location is the basolateral cell membrane. The enzyme catalyses 3,3',5-triiodo-L-thyronine + iodide + A + H(+) = L-thyroxine + AH2. It carries out the reaction 3,3',5'-triiodo-L-thyronine + iodide + A + H(+) = L-thyroxine + AH2. It catalyses the reaction 3,3'-diiodo-L-thyronine + iodide + A + H(+) = 3,3',5'-triiodo-L-thyronine + AH2. The catalysed reaction is 3,3'-diiodo-L-thyronine + iodide + A + H(+) = 3,3',5-triiodo-L-thyronine + AH2. The enzyme catalyses 3'-iodo-L-thyronine + iodide + A + H(+) = 3',5'-diiodo-L-thyronine + AH2. It carries out the reaction 3-iodo-L-thyronine + iodide + A + H(+) = 3,5-diiodo-L-thyronine + AH2. It catalyses the reaction 3-iodo-L-thyronine + iodide + A + H(+) = 3,3'-diiodo-L-thyronine + AH2. The catalysed reaction is 3,3'-diiodothyronamine + iodide + A + H(+) = 3,3',5'-triiodothyronamine + AH2. The enzyme catalyses 3'-iodothyronamine + iodide + A + H(+) = 3',5'-diiodothyronamine + AH2. It carries out the reaction 3-iodothyronamine + iodide + A + H(+) = 3,3'-diiodothyronamine + AH2. It catalyses the reaction 3,3'-diiodothyronamine + iodide + A + H(+) = 3,3',5-triiodothyronamine + AH2. The catalysed reaction is 3-iodothyronamine + iodide + A + H(+) = 3,5-diiodothyronamine + AH2. The enzyme catalyses 3,3'-diiodo-L-thyronine sulfate + iodide + A + H(+) = 3,3',5'-triiodo-L-thyronine sulfate + AH2. It carries out the reaction 3,3',5'-triiodo-L-thyronine sulfate + iodide + A + H(+) = L-thyroxine sulfate + AH2. It catalyses the reaction 3,3'-diiodo-L-thyronine sulfate + iodide + A + H(+) = 3,3',5-triiodo-L-thyronine sulfate + AH2. Its function is as follows. Plays a crucial role in the metabolism of thyroid hormones (TH) and has specific roles in TH activation and inactivation by deiodination. Catalyzes the deiodination of L-thyroxine (T4) to 3,5,3'-triiodothyronine (T3) and 3',5'-diiodothyronine (3',5'-T2) to 3'-monoiodothyronine (3'-T1) via outer-ring deiodination (ORD). Catalyzes the deiodination of T4 to 3,3',5'-triiodothyronine (rT3), T3 to 3,3'-diiodothyronine (3,3'-T2), 3,5-diiodothyronine (3,5-T2) to 3-monoiodothyronine (3-T1) and 3,3'-T2 to 3-T1 via inner-ring deiodination (IRD). Catalyzes the deiodination of rT3 to 3,3'-T2 via ORD. Catalyzes the phenolic ring deiodinations of 3,3',5'-triiodothyronamine, 3',5'-diiodothyronamine and 3,3'-diiodothyronamine as well as tyrosyl ring deiodinations of 3,5,3'-triiodothyronamine and 3,5-diiodothyronamine. Catalyzes the deiodination of L-thyroxine sulfate and 3,3',5-triiodo-L-thyronine sulfate via IRD and of 3,3',5'-triiodo-L-thyronine sulfate via ORD. This is Type I iodothyronine deiodinase (DIO1) from Suncus murinus (Asian house shrew).